The chain runs to 432 residues: Serine--tRNA ligase (432 aa).

236–238 is a binding site for L-serine; it reads TSE. 267 to 269 contributes to the ATP binding site; that stretch reads RSE. L-serine is bound at residue E290. Residue 354–357 coordinates ATP; the sequence is EISS. S390 serves as a coordination point for L-serine.

It belongs to the class-II aminoacyl-tRNA synthetase family. Type-1 seryl-tRNA synthetase subfamily. Homodimer. The tRNA molecule binds across the dimer.

The protein resides in the cytoplasm. The catalysed reaction is tRNA(Ser) + L-serine + ATP = L-seryl-tRNA(Ser) + AMP + diphosphate + H(+). It carries out the reaction tRNA(Sec) + L-serine + ATP = L-seryl-tRNA(Sec) + AMP + diphosphate + H(+). The protein operates within aminoacyl-tRNA biosynthesis; selenocysteinyl-tRNA(Sec) biosynthesis; L-seryl-tRNA(Sec) from L-serine and tRNA(Sec): step 1/1. Its function is as follows. Catalyzes the attachment of serine to tRNA(Ser). Is also able to aminoacylate tRNA(Sec) with serine, to form the misacylated tRNA L-seryl-tRNA(Sec), which will be further converted into selenocysteinyl-tRNA(Sec). The polypeptide is Serine--tRNA ligase (Pseudoalteromonas atlantica (strain T6c / ATCC BAA-1087)).